The primary structure comprises 462 residues: Kinetochore protein Nuf2-B (462 aa).

Positions 143-462 (SGYKSALENV…AELNRRLSRQ (320 aa)) form a coiled coil. The segment at 236–259 (EQERMKSQIVESPEQRKSKTERMK) is disordered. Basic and acidic residues predominate over residues 248–259 (PEQRKSKTERMK).

It belongs to the NUF2 family. Component of the NDC80 complex, which is composed of ndc80, cdca1, spbc24 and spbc25. The NDC80 complex interacts with mis12 and zwint.

The protein localises to the nucleus. It localises to the chromosome. The protein resides in the centromere. It is found in the kinetochore. Functionally, acts as a component of the essential kinetochore-associated NDC80 complex, which is required for chromosome segregation and spindle checkpoint activity. Required for kinetochore integrity and the organization of stable microtubule binding sites in the outer plate of the kinetochore. The NDC80 complex synergistically enhances the affinity of the SKA1 complex for microtubules and may allow the NDC80 complex to track depolymerizing microtubules. In Xenopus laevis (African clawed frog), this protein is Kinetochore protein Nuf2-B (nuf2-b).